A 389-amino-acid polypeptide reads, in one-letter code: Type 2 DNA topoisomerase 6 subunit A (389 aa).

In terms of domain architecture, Topo IIA-type catalytic spans 12–162 (EARRKAANIL…MLILSKEKGK (151 aa)). The active-site O-(5'-phospho-DNA)-tyrosine intermediate is Tyr106. Mg(2+) contacts are provided by Glu209 and Asp261.

The protein belongs to the TOP6A family. In terms of assembly, homodimer. Heterotetramer of two Top6A and two Top6B chains. Mg(2+) is required as a cofactor.

The enzyme catalyses ATP-dependent breakage, passage and rejoining of double-stranded DNA.. Its activity is regulated as follows. Not inhibited by the DNA gyrase inhibitor novobiocin, instead inhibited by eukaryotic topoisomerase inhibitors such as m- and o-amsacrine, ellipticine, and the quinolone CP-115,953. Relaxes both positive and negative supercoils and exhibits a strong decatenase and unknotting activity; it cannot introduce DNA supercoils. ATP is absolutely required for DNA cleavage; the nonhydrolyzable analog AMP-PNP generates nicked or linear products from a supercoiled dsDNA substrate. Generates staggered two-nucleotide long 5' overhangs. The enzyme is covalently attached transiently to the 5'-ends of the cleaved strands. The sequence is that of Type 2 DNA topoisomerase 6 subunit A from Saccharolobus shibatae (strain ATCC 51178 / DSM 5389 / JCM 8931 / NBRC 15437 / B12) (Sulfolobus shibatae).